Consider the following 392-residue polypeptide: Nicotinate phosphoribosyltransferase (392 aa).

His216 bears the Phosphohistidine; by autocatalysis mark.

The protein belongs to the NAPRTase family. Transiently phosphorylated on a His residue during the reaction cycle. Phosphorylation strongly increases the affinity for substrates and increases the rate of nicotinate D-ribonucleotide production. Dephosphorylation regenerates the low-affinity form of the enzyme, leading to product release.

It catalyses the reaction nicotinate + 5-phospho-alpha-D-ribose 1-diphosphate + ATP + H2O = nicotinate beta-D-ribonucleotide + ADP + phosphate + diphosphate. The protein operates within cofactor biosynthesis; NAD(+) biosynthesis; nicotinate D-ribonucleotide from nicotinate: step 1/1. Catalyzes the synthesis of beta-nicotinate D-ribonucleotide from nicotinate and 5-phospho-D-ribose 1-phosphate at the expense of ATP. The protein is Nicotinate phosphoribosyltransferase of Cupriavidus necator (strain ATCC 17699 / DSM 428 / KCTC 22496 / NCIMB 10442 / H16 / Stanier 337) (Ralstonia eutropha).